We begin with the raw amino-acid sequence, 689 residues long: Solute carrier organic anion transporter family member 1B2 (689 aa).

The Cytoplasmic segment spans residues M1 to R26. A helical membrane pass occupies residues I27–M46. The Extracellular segment spans residues K47 to G65. A helical membrane pass occupies residues L66–G86. Residues S87–P92 lie on the Cytoplasmic side of the membrane. The chain crosses the membrane as a helical span at residues K93–G117. The Extracellular portion of the chain corresponds to Y118 to S163. 2 N-linked (GlcNAc...) asparagine glycosylation sites follow: N132 and N140. Residues Y164 to D192 form a helical membrane-spanning segment. Topologically, residues D193–A211 are cytoplasmic. Residues M212–V232 traverse the membrane as a helical segment. The Extracellular portion of the chain corresponds to G233–V250. A helical transmembrane segment spans residues G251–P275. The Cytoplasmic portion of the chain corresponds to K276–S326. 2 positions are modified to phosphoserine: S288 and S290. A helical transmembrane segment spans residues I327 to I348. Residues G349–Q368 are Extracellular-facing. The chain crosses the membrane as a helical span at residues A369–I392. The Cytoplasmic segment spans residues K393–K396. The helical transmembrane segment at L397–Y420 threads the bilayer. The Extracellular segment spans residues F421–Y533. Residues D448–S505 form the Kazal-like domain. 3 disulfides stabilise this stretch: C454–C484, C460–C480, and C469–C503. N513 carries an N-linked (GlcNAc...) asparagine glycan. A helical transmembrane segment spans residues I534–I556. Residues R557–S565 lie on the Cytoplasmic side of the membrane. Residues L566–I591 form a helical membrane-spanning segment. The Extracellular segment spans residues D592–S625. A helical membrane pass occupies residues I626–M643. Residues K644 to L689 lie on the Cytoplasmic side of the membrane. Residues G658–L689 form a disordered region. T662 is subject to Phosphothreonine. S680 is modified (phosphoserine). The span at S680–L689 shows a compositional bias: basic and acidic residues.

It belongs to the organo anion transporter (TC 2.A.60) family. Liver specific.

The protein localises to the cell membrane. The enzyme catalyses estrone 3-sulfate(out) = estrone 3-sulfate(in). It catalyses the reaction taurocholate(out) = taurocholate(in). It carries out the reaction prostaglandin E2(out) = prostaglandin E2(in). The catalysed reaction is L-thyroxine(out) = L-thyroxine(in). Mediates the Na(+)-independent uptake of organic anions such as taurochlate, bromosulfophthalein and steroid conjugates (estrone 3-sulfate, 17-beta-glucuronosyl estradiol, dehydroepiandrosterone sulfate). Also transports prostaglandin E2 and L-thyroxine (T4). Shows a pH-sensitive substrate specificity which may be ascribed to the protonation state of the binding site and leads to a stimulation of substrate transport in an acidic microenvironment. Hydrogencarbonate/HCO3(-) acts as the probable counteranion that exchanges for organic anions. This chain is Solute carrier organic anion transporter family member 1B2 (Slco1b2), found in Mus musculus (Mouse).